We begin with the raw amino-acid sequence, 277 residues long: NAD kinase (277 aa).

Catalysis depends on aspartate 67, which acts as the Proton acceptor. NAD(+) contacts are provided by residues 67 to 68 (DG), arginine 72, 137 to 138 (NE), lysine 148, arginine 165, aspartate 167, 178 to 183 (TGYAMS), leucine 202, and glutamine 236.

This sequence belongs to the NAD kinase family. The cofactor is a divalent metal cation.

The protein localises to the cytoplasm. The enzyme catalyses NAD(+) + ATP = ADP + NADP(+) + H(+). Involved in the regulation of the intracellular balance of NAD and NADP, and is a key enzyme in the biosynthesis of NADP. Catalyzes specifically the phosphorylation on 2'-hydroxyl of the adenosine moiety of NAD to yield NADP. This Pyrococcus abyssi (strain GE5 / Orsay) protein is NAD kinase.